The sequence spans 421 residues: Diaminobutyrate--2-oxoglutarate transaminase (421 aa).

K267 carries the post-translational modification N6-(pyridoxal phosphate)lysine.

It belongs to the class-III pyridoxal-phosphate-dependent aminotransferase family. In terms of assembly, homohexamer. The cofactor is pyridoxal 5'-phosphate.

It catalyses the reaction L-2,4-diaminobutanoate + 2-oxoglutarate = L-aspartate 4-semialdehyde + L-glutamate. Its pathway is amine and polyamine biosynthesis; ectoine biosynthesis; L-ectoine from L-aspartate 4-semialdehyde: step 1/3. Functionally, catalyzes reversively the conversion of L-aspartate beta-semialdehyde (ASA) to L-2,4-diaminobutyrate (DABA) by transamination with L-glutamate. Seems to use L-glutamate specifically as the amino group donor to ASA, as it is not active with L-alanine, L-glutamine, L-aspartate and L-lysine, and is only poorly active with L-homoserine. In the reverse reaction, gamma-aminobutyric acid (GABA) and L-ornithine can also be used as amino group donors to 2-oxoglutarate, but with a reduced activity compared to that with DABA. The sequence is that of Diaminobutyrate--2-oxoglutarate transaminase (ectB) from Halomonas elongata (strain ATCC 33173 / DSM 2581 / NBRC 15536 / NCIMB 2198 / 1H9).